The chain runs to 266 residues: Vitamin B12-binding protein (266 aa).

The first 22 residues, 1–22 (MAKSLFRALVALSFLAPLWLNA), serve as a signal peptide directing secretion. The Fe/B12 periplasmic-binding domain occupies 25–266 (RVITLSPANT…QLCNALSQVD (242 aa)). Cyanocob(III)alamin-binding positions include Y50 and 242-246 (DWFER). A disulfide bridge links C183 with C259.

This sequence belongs to the BtuF family. In terms of assembly, the complex is composed of two ATP-binding proteins (BtuD), two transmembrane proteins (BtuC) and a solute-binding protein (BtuF).

It is found in the periplasm. Functionally, part of the ABC transporter complex BtuCDF involved in vitamin B12 import. Binds vitamin B12 and delivers it to the periplasmic surface of BtuC. This Shigella flexneri protein is Vitamin B12-binding protein.